The chain runs to 498 residues: Swainsonine transporter swnT (498 aa).

Residues 1–10 (MSLRNDEQTE) are compositionally biased toward basic and acidic residues. The interval 1 to 21 (MSLRNDEQTEKGAVVGKVDSQ) is disordered. 5 helical membrane-spanning segments follow: residues 42–64 (LSAIGIGYGVTNTAVGLLLVLGT), 79–99 (LAMAAVGLATATTLSELISAI), 126–146 (AMISWIAAIAIGASGNLAVPV), 167–187 (FVVFQLINIVTCFGACFEYFL), and 193–213 (ALLLVNVLSVSAIIITLFATA). Residues Asn-227 and Asn-242 are each glycosylated (N-linked (GlcNAc...) asparagine). Transmembrane regions (helical) follow at residues 272–292 (LIWTIVIAFSSGLLMILAVLV), 316–336 (AAAIGLWVPVLFLVFASVWSI), 370–390 (PIWSLIGSAIGTALFGCLYLA), 398–418 (LIATGILLQYASYSIPTILVL), 436–456 (GFMANIVMLAWTLVALIFYCF), and 469–489 (YVSAVLILIAILITSLWFLYA).

It belongs to the amino acid-polyamine-organocation (APC) superfamily. Amino acid/choline transporter (ACT) (TC 2.A.3.4) family.

It is found in the membrane. In terms of biological role, transmembrane transporter; part of the gene cluster that mediates the biosynthesis of swainsonine, a cytotoxic fungal alkaloid and a potential cancer therapy drug. Does not mediate the secretion of SW and the exact role of swnT in SW biosynthesis remains to be determined. This is Swainsonine transporter swnT from Arthroderma benhamiae (strain ATCC MYA-4681 / CBS 112371) (Trichophyton mentagrophytes).